The chain runs to 344 residues: MMNSTNKLSVIIPLYNAGDDFRTCMESLITQTWTALEIIIINDGSTDNSVEIAKYYAENYPHVRLLHQANAGASVARNRGIEVATGKYVAFVDADDEVYPTMYETLMTMALEDDLDVAQCNADWCFRETGETWQSIPTDRLRSTGVLTGPDWLRMGLSSRRWTHVVWMGVYRRDVIVKNNIKFIAGLHHQDIVWTTEFMFNALRARYTEQSLYKYYLHNTSVSRLHRQGNKNLNYQRHYIKITRLLEKLNRNYADKIMIYPEFHQQITYEALRVCHAVRKEPDILTRQRMIAEIFTSGMYKRLITNVRSVKVGYQALLWSFRLWQWRDKTRSHHRITRSAFNLR.

It belongs to the glycosyltransferase 2 family.

This is an uncharacterized protein from Escherichia coli (strain K12).